The sequence spans 479 residues: MAISWAAATTSKLAYPPHVHFSPSPSSNYLFLKTHKPSATHLSSSFIHPTTILHLAAANTTTRRRSFTVRAARGKFERKKPHVNIGTIGHVDHGKTTLTAALTMALASLGNSAPKKYDEIDAAPEERARGITINTATVEYETENRHYAHVDCPGHADYVKNMITGAAQMDGAILVVSGADGPMPQTKEHILLAKQVGVPNIVVFLNKQDQVDDEELLQLVELEVRELLSKYEFPGDDVPIISGSALLSLEALMANPSIKRGENQWVDKIYELMEAVDDYIPIPQRQTELPFLLAIEDVFTITGRGTVATGRVERGTIRVGETVDIVGVKDTRNTTVTGVEMFQKILDEALAGDNVGLLLRGIQKTDIQRGMVLAKPGTITPHTKFSAIVYVLKKEEGGRHSPFFSGYRPQFYMRTTDVTGKVTEIMNDKDEESKMVMPGDRVKLVVELIVPVACEQGMRFAIREGGKTVGAGVIQSIIE.

The transit peptide at 1–70 directs the protein to the chloroplast; it reads MAISWAAATT…TTRRRSFTVR (70 aa). The tr-type G domain maps to 80–284; sequence KPHVNIGTIG…AVDDYIPIPQ (205 aa). The tract at residues 89–96 is G1; the sequence is GHVDHGKT. Residue 89–96 participates in GTP binding; it reads GHVDHGKT. The tract at residues 130-134 is G2; that stretch reads GITIN. The tract at residues 151–154 is G3; sequence DCPG. GTP is bound by residues 151–155 and 206–209; these read DCPGH and NKQD. The tract at residues 206 to 209 is G4; the sequence is NKQD. The G5 stretch occupies residues 244 to 246; sequence SAL.

This sequence belongs to the TRAFAC class translation factor GTPase superfamily. Classic translation factor GTPase family. EF-Tu/EF-1A subfamily.

It localises to the plastid. It is found in the chloroplast. This protein promotes the GTP-dependent binding of aminoacyl-tRNA to the A-site of ribosomes during protein biosynthesis. This Glycine max (Soybean) protein is Elongation factor Tu, chloroplastic (TUFB1).